A 453-amino-acid chain; its full sequence is tRNA-2-methylthio-N(6)-dimethylallyladenosine synthase (453 aa).

In terms of domain architecture, MTTase N-terminal spans 17 to 135; the sequence is GTFFIETWGC…FPEYLNRAKQ (119 aa). 6 residues coordinate [4Fe-4S] cluster: C26, C62, C96, C172, C176, and C179. The Radical SAM core domain maps to 158–388; that stretch reads RKSSTKAFVT…VEVVNKSCEK (231 aa). One can recognise a TRAM domain in the interval 391–453; it reads KKYQDRIVKV…LSFSLEGEEV (63 aa).

This sequence belongs to the methylthiotransferase family. MiaB subfamily. In terms of assembly, monomer. Requires [4Fe-4S] cluster as cofactor.

It is found in the cytoplasm. The enzyme catalyses N(6)-dimethylallyladenosine(37) in tRNA + (sulfur carrier)-SH + AH2 + 2 S-adenosyl-L-methionine = 2-methylsulfanyl-N(6)-dimethylallyladenosine(37) in tRNA + (sulfur carrier)-H + 5'-deoxyadenosine + L-methionine + A + S-adenosyl-L-homocysteine + 2 H(+). Its function is as follows. Catalyzes the methylthiolation of N6-(dimethylallyl)adenosine (i(6)A), leading to the formation of 2-methylthio-N6-(dimethylallyl)adenosine (ms(2)i(6)A) at position 37 in tRNAs that read codons beginning with uridine. The protein is tRNA-2-methylthio-N(6)-dimethylallyladenosine synthase of Clostridium tetani (strain Massachusetts / E88).